The following is a 147-amino-acid chain: Ribonuclease 4 (147 aa).

Positions 1 to 28 (MDIQRTQSLLLLLLLTLLGLGLVQPSYG) are cleaved as a signal peptide. The residue at position 29 (Q29) is a Pyrrolidone carboxylic acid. DUMP is bound by residues R35, H40, K68, N71, and T72. The active-site Proton acceptor is the H40. Disulfide bonds link C53–C109, C67–C120, C85–C135, and C92–C99. H144 (proton donor) is an active-site residue. Residue F145 participates in dUMP binding.

It belongs to the pancreatic ribonuclease family.

It localises to the secreted. In terms of biological role, cleaves preferentially after uridine bases. Has antimicrobial activity against uropathogenic E.coli (UPEC). Probably contributes to urinary tract sterility. The protein is Ribonuclease 4 (Rnase4) of Rattus norvegicus (Rat).